The chain runs to 615 residues: Ras association domain-containing protein 1 homolog (615 aa).

Disordered regions lie at residues 1-29 (MLRS…PTYQ) and 69-89 (SDDE…QSIG). Low complexity predominate over residues 76–87 (TSSTSSPQSEQS). The segment at 164–214 (NHSFKTHSLLHPTWCDKCGDFIWGILKEALKCEHCNYTCHARCRDLVTLDC) adopts a Phorbol-ester/DAG-type zinc-finger fold. A disordered region spans residues 249 to 268 (PAMSSSTGSDKENGNGNSAG). Residues 251–268 (MSSSTGSDKENGNGNSAG) show a composition bias toward polar residues. The 101-residue stretch at 396 to 496 (KTTSLRTITS…RALVLQENDT (101 aa)) folds into the Ras-associating domain. In terms of domain architecture, SARAH spans 498-545 (DILWDAFEIPELENFLRILGMEEKQYVFQTQQKYQQYRYHLDAELRQR).

Interacts with rab-39 (GTP-bound form). Interacts (via SARAH domain) with cst-1; the interaction is required for the phosphorylation of cst-1. As to expression, expressed in the pharynx, epithelial cells, ciliated neurons in the head, body wall muscles, hypodermis, vulva, gonadal sheath cells, tail hypodermis and in coelomocytes. Expressed in the pharynx, neurons and vulva.

It localises to the cytoplasm. Its subcellular location is the cytoskeleton. Functionally, involved in embryonic morphogenesis. Plays a role in the organization of apical filamentous actin in epithelial cells of the developing embryo. May play a role in let-60-mediated vulval development. May induce nuclear condensation. Positively regulates the oxidative stress response, and this may be in association with the small GTPase rab-39. Not required for muscle integrity. This Caenorhabditis elegans protein is Ras association domain-containing protein 1 homolog.